Consider the following 83-residue polypeptide: Protein midgut expression 1 (83 aa).

In terms of tissue distribution, endoderm-specific pattern of expression during embryogenesis; anterior and posterior midgut primordia.

Its function is as follows. Involved in morphogenesis and development. This Drosophila melanogaster (Fruit fly) protein is Protein midgut expression 1 (mex1).